The primary structure comprises 360 residues: RNA demethylase ALKBH5 (360 aa).

Residues 1 to 53 are disordered; that stretch reads MSATYTDLREKLQSLNRDSPKEVRKRKQPASDTEEEDEAGSEPEAEEEEARKV. The span at 7–22 shows a compositional bias: basic and acidic residues; sequence DLREKLQSLNRDSPKE. The span at 32-48 shows a compositional bias: acidic residues; that stretch reads DTEEEDEAGSEPEAEEE. Residue Tyr-107 is part of the active site. Positions 161, 163, 172, 234, and 245 each coordinate 2-oxoglutarate. Cys-198 and Cys-235 form a disulfide bridge. A disordered region spans residues 261–360; the sequence is EMKSLSSSYQ…PVRKVKMRRH (100 aa). Residues 264–280 show a composition bias toward polar residues; sequence SLSSSYQPERLQGSNRQ. The span at 281-290 shows a compositional bias: basic residues; sequence HILKPKRSHR. Basic and acidic residues-rich tracts occupy residues 291–312 and 330–340; these read KADP…ENRR and YWRRSHDHVDT.

Belongs to the alkB family. As to quaternary structure, monomer. Fe(2+) is required as a cofactor.

The protein resides in the nucleus speckle. It catalyses the reaction an N(6)-methyladenosine in mRNA + 2-oxoglutarate + O2 = an adenosine in mRNA + formaldehyde + succinate + CO2. In terms of biological role, dioxygenase that specifically demethylates N(6)-methyladenosine (m6A) RNA, the most prevalent internal modification of messenger RNA (mRNA) in higher eukaryotes. Demethylates RNA by oxidative demethylation, which requires molecular oxygen, alpha-ketoglutarate and iron. Demethylation of m6A mRNA affects mRNA processing, translation and export. This is RNA demethylase ALKBH5 (alkbh5) from Xenopus laevis (African clawed frog).